The primary structure comprises 637 residues: MYQSACQAATTGSCVPGTGQQPDNERQSALIAQQPPTAPVEPDYSGFDIVKATQYGAIARVRELVESGWDVNQPDSETVTLLHWAAINNRRDIIRYFLEKGATVDAVGGELNATPLHWATRQGHLGAVVLLMAAGADPRIRDAEGCSCIHIAAQFAHTALVAYFIAKGVDPDLQDRGGMTALMWAAWKVCALDPVRLLLTLGANPAMVDYTHGNTALHWAILARNATAISTLVLKSKASLDVPNLRGETPLSMLESQTGAIWIGAKVMDRVKEAALTSQQRRSLLSKLRHDKRLRWWSMVACPFTAFYLAGIVFTVNTLYIIKFFLLGCLYSIFHTIGKALFDEHLMALLPLSVYLATKAWFYVTWLMYIDDAVSFTATVCFLISSLLLWVCFLKSWKGDPGIIRPTREQRFKTIIELSERGGIGFEPASFCSGCLVRRPIRSKHCSVCDRCVARFDHHCPWVGNCIGLKNHSYFMGFLWMLLIMCAWMLYGGSKYYVNQCNVRFDDFLGAMRAIGNCDAWVGWVMGNALLHMSWVILLTICQTYQVICLGMTTNERMNRGRYRHFQAKGGHSPFTRGPIQNLVDFLECSCFGLVQPKRVDWMNYYDYDAQTHQTIEKEPLLSVDCPDGMAGDHQYV.

At 1–295 (MYQSACQAAT…SKLRHDKRLR (295 aa)) the chain is on the cytoplasmic side. ANK repeat units follow at residues 77-106 (ETVTLLHWAAINNRRDIIRYFLEKGATVDA), 111-140 (LNATPLHWATRQGHLGAVVLLMAAGADPRI), 144-173 (EGCSCIHIAAQFAHTALVAYFIAKGVDPDL), 177-207 (GGMTALMWAAWKVCALDPVRLLLTLGANPAM), and 212-242 (HGNTALHWAILARNATAISTLVLKSKASLDV). Residues 296-315 (WWSMVACPFTAFYLAGIVFT) traverse the membrane as a helical segment. Residues 316 to 318 (VNT) are Lumenal-facing. Residues 319-341 (LYIIKFFLLGCLYSIFHTIGKAL) form a helical membrane-spanning segment. At 342 to 345 (FDEH) the chain is on the cytoplasmic side. Residues 346–366 (LMALLPLSVYLATKAWFYVTW) traverse the membrane as a helical segment. The Lumenal portion of the chain corresponds to 367-373 (LMYIDDA). A helical transmembrane segment spans residues 374–394 (VSFTATVCFLISSLLLWVCFL). Topologically, residues 395–472 (KSWKGDPGII…VGNCIGLKNH (78 aa)) are cytoplasmic. The 51-residue stretch at 430-480 (SFCSGCLVRRPIRSKHCSVCDRCVARFDHHCPWVGNCIGLKNHSYFMGFLW) folds into the DHHC domain. Cys-460 functions as the S-palmitoyl cysteine intermediate in the catalytic mechanism. Residues 473–493 (SYFMGFLWMLLIMCAWMLYGG) traverse the membrane as a helical segment. Residues 494 to 520 (SKYYVNQCNVRFDDFLGAMRAIGNCDA) are Lumenal-facing. Residues 521-541 (WVGWVMGNALLHMSWVILLTI) traverse the membrane as a helical segment. Over 542 to 637 (CQTYQVICLG…DGMAGDHQYV (96 aa)) the chain is Cytoplasmic.

Belongs to the DHHC palmitoyltransferase family. AKR/ZDHHC17 subfamily. In terms of assembly, interacts with dorsal-ventral patterning protein Sog. In terms of tissue distribution, in stage 13-15 embryos, expressed in the central nervous system. At the third instar larval stage, expressed in the ventral nerve cord and is enriched in the neuropil.

Its subcellular location is the golgi apparatus membrane. The protein localises to the presynaptic cell membrane. It carries out the reaction L-cysteinyl-[protein] + hexadecanoyl-CoA = S-hexadecanoyl-L-cysteinyl-[protein] + CoA. In terms of biological role, probable palmitoyltransferase which is required for photoreceptor synaptic transmission and for the correct expression and localization of palmitoylated protein Csp and synaptosomal-associated protein Snap25. Probably palmitoylates Csp. Probably also palmitoylates the dorsal-ventral patterning protein Sog and promotes its secretion and activity and the stabilization of the membrane-bound form. Required for synaptic vesicle exocytosis. This chain is Palmitoyltransferase Hip14, found in Drosophila melanogaster (Fruit fly).